Consider the following 276-residue polypeptide: Shikimate dehydrogenase (NADP(+)) (276 aa).

Shikimate-binding positions include 15 to 17 (SLS) and T62. K66 acts as the Proton acceptor in catalysis. NADP(+) is bound at residue E78. Shikimate-binding residues include N87 and D102. Residues 151–156 (NRTVEK) and I218 each bind NADP(+). Position 220 (Y220) interacts with shikimate. Position 241 (G241) interacts with NADP(+).

It belongs to the shikimate dehydrogenase family. Homodimer.

The catalysed reaction is shikimate + NADP(+) = 3-dehydroshikimate + NADPH + H(+). The protein operates within metabolic intermediate biosynthesis; chorismate biosynthesis; chorismate from D-erythrose 4-phosphate and phosphoenolpyruvate: step 4/7. Its function is as follows. Involved in the biosynthesis of the chorismate, which leads to the biosynthesis of aromatic amino acids. Catalyzes the reversible NADPH linked reduction of 3-dehydroshikimate (DHSA) to yield shikimate (SA). This Geobacillus kaustophilus (strain HTA426) protein is Shikimate dehydrogenase (NADP(+)).